The sequence spans 97 residues: Intermembrane phospholipid transport system binding protein MlaB (97 aa).

Positions M1 to R97 constitute an STAS domain.

As to quaternary structure, the complex is composed of two ATP-binding proteins (MlaF), two transmembrane proteins (MlaE), two cytoplasmic solute-binding proteins (MlaB) and six periplasmic solute-binding proteins (MlaD).

The protein localises to the cytoplasm. Its function is as follows. Part of the ABC transporter complex MlaFEDB, which is involved in a phospholipid transport pathway that maintains lipid asymmetry in the outer membrane by retrograde trafficking of phospholipids from the outer membrane to the inner membrane. MlaB plays critical roles in both the assembly and activity of the complex. May act by modulating MlaF structure and stability. The chain is Intermembrane phospholipid transport system binding protein MlaB from Escherichia coli (strain K12).